A 161-amino-acid chain; its full sequence is Lipoprotein signal peptidase (161 aa).

4 consecutive transmembrane segments (helical) span residues Pro-11–Val-31, Leu-44–Phe-64, Gly-66–Ala-86, and Gly-100–Ile-120. Catalysis depends on residues Asp-121 and Asp-137. Residues Leu-135–Val-155 form a helical membrane-spanning segment.

The protein belongs to the peptidase A8 family.

It localises to the cell inner membrane. The enzyme catalyses Release of signal peptides from bacterial membrane prolipoproteins. Hydrolyzes -Xaa-Yaa-Zaa-|-(S,diacylglyceryl)Cys-, in which Xaa is hydrophobic (preferably Leu), and Yaa (Ala or Ser) and Zaa (Gly or Ala) have small, neutral side chains.. The protein operates within protein modification; lipoprotein biosynthesis (signal peptide cleavage). In terms of biological role, this protein specifically catalyzes the removal of signal peptides from prolipoproteins. The chain is Lipoprotein signal peptidase from Synechocystis sp. (strain ATCC 27184 / PCC 6803 / Kazusa).